The chain runs to 233 residues: Orotidine 5'-phosphate decarboxylase (233 aa).

Substrate is bound by residues Asp12, Lys34, 61 to 70 (DLKFHDIPNT), Thr120, Arg181, Gln190, Gly210, and Arg211. Lys63 acts as the Proton donor in catalysis.

This sequence belongs to the OMP decarboxylase family. Type 1 subfamily. Homodimer.

It carries out the reaction orotidine 5'-phosphate + H(+) = UMP + CO2. It participates in pyrimidine metabolism; UMP biosynthesis via de novo pathway; UMP from orotate: step 2/2. Catalyzes the decarboxylation of orotidine 5'-monophosphate (OMP) to uridine 5'-monophosphate (UMP). This Hahella chejuensis (strain KCTC 2396) protein is Orotidine 5'-phosphate decarboxylase.